Here is a 330-residue protein sequence, read N- to C-terminus: Aspartate--ammonia ligase (330 aa).

Belongs to the class-II aminoacyl-tRNA synthetase family. AsnA subfamily.

It localises to the cytoplasm. It carries out the reaction L-aspartate + NH4(+) + ATP = L-asparagine + AMP + diphosphate + H(+). The protein operates within amino-acid biosynthesis; L-asparagine biosynthesis; L-asparagine from L-aspartate (ammonia route): step 1/1. The chain is Aspartate--ammonia ligase from Escherichia coli O7:K1 (strain IAI39 / ExPEC).